A 564-amino-acid chain; its full sequence is Kelch repeat and BTB domain-containing protein A55 (564 aa).

Positions 21–88 (CDISIVINDE…IYGIPLSLTN (68 aa)) constitute a BTB domain. Kelch repeat units lie at residues 252–297 (IELI…VLDN), 298–346 (IIYM…ADDE), 347–395 (YIYC…MLNG), 397–441 (IYVM…VHDG), 442–492 (KIYI…SAHN), and 494–539 (LYVG…CEPI).

Belongs to the poxviruses A55 protein family. As to quaternary structure, interacts (via BTB domain) with host CUL3.

It localises to the host cytoplasm. Probable substrate-specific adapter of CUL3-containing E3 ubiquitin-protein ligases which mediate the ubiquitination and subsequent proteasomal degradation of host target proteins. This chain is Kelch repeat and BTB domain-containing protein A55 (KBTB1), found in Bos taurus (Bovine).